The following is a 128-amino-acid chain: Large ribosomal subunit protein bL12 (128 aa).

It belongs to the bacterial ribosomal protein bL12 family. Homodimer. Part of the ribosomal stalk of the 50S ribosomal subunit. Forms a multimeric L10(L12)X complex, where L10 forms an elongated spine to which 2 to 4 L12 dimers bind in a sequential fashion. Binds GTP-bound translation factors.

Functionally, forms part of the ribosomal stalk which helps the ribosome interact with GTP-bound translation factors. Is thus essential for accurate translation. The sequence is that of Large ribosomal subunit protein bL12 from Thermotoga petrophila (strain ATCC BAA-488 / DSM 13995 / JCM 10881 / RKU-1).